The primary structure comprises 207 residues: Cytochrome bo(3) ubiquinol oxidase subunit 3 (207 aa).

The Cytoplasmic portion of the chain corresponds to 1–26 (MSSQVMHGAAHGHDHGHDDHHHDSGQ). Residues 27–47 (MTVLGFWLYLMTDCILFASLF) form a helical membrane-spanning segment. Residues 48-70 (ATYAVLSGSFAGGPSGHDIFQLD) lie on the Periplasmic side of the membrane. A helical transmembrane segment spans residues 71-91 (FVAVETLFLLLSSITFGFAML). The Cytoplasmic portion of the chain corresponds to 92–99 (KMFDGKKA). The helical transmembrane segment at 100 to 120 (GVLGWLAVTFLFGAGFIAMEI) threads the bilayer. At 121-141 (YEFHHLIAEGFGPQRSGFLSG) the chain is on the periplasmic side. A helical membrane pass occupies residues 142–162 (FFALVGTHGLHVTAGLIWMAI). Residues 163 to 185 (MMYQINKHGITPTAKTRMSCLSL) are Cytoplasmic-facing. Residues 186-206 (FWHFLDVVWICVFTVVYLLGV) traverse the membrane as a helical segment. Leu-207 is a topological domain (periplasmic).

It belongs to the cytochrome c oxidase subunit 3 family. Heterooctamer of two A chains, two B chains, two C chains and two D chains.

The protein resides in the cell inner membrane. Its function is as follows. Cytochrome bo(3) ubiquinol terminal oxidase is the component of the aerobic respiratory chain of E.coli that predominates when cells are grown at high aeration. Has proton pump activity across the membrane in addition to electron transfer, pumping 2 protons/electron. This chain is Cytochrome bo(3) ubiquinol oxidase subunit 3 (cyoC), found in Pseudomonas putida (Arthrobacter siderocapsulatus).